Reading from the N-terminus, the 86-residue chain is Mu-theraphotoxin-Cg2a 1 (86 aa).

The N-terminal stretch at 1 to 21 (MKVSVVITLAVLGIMFVWASA) is a signal peptide. Positions 22 to 50 (AELEERGSDQRDSPAWLKSMERIFQSEER) are excised as a propeptide. Intrachain disulfides connect Cys52–Cys66, Cys59–Cys71, and Cys65–Cys78. The residue at position 84 (Phe84) is a Phenylalanine amide.

Belongs to the neurotoxin 10 (Hwtx-1) family. 37 (Jztx-31) subfamily. As to expression, expressed by the venom gland.

It is found in the secreted. Its function is as follows. Inhibits both peak current and fast inactivation of voltage-gated sodium channels (Nav) channels. Inhibits the inactivation of Nav on DRG neurons (EC(50)=1.77 uM) and peak current of cardiac myocytes (IC(50)=0.90 uM). This chain is Mu-theraphotoxin-Cg2a 1, found in Chilobrachys guangxiensis (Chinese earth tiger tarantula).